Here is a 372-residue protein sequence, read N- to C-terminus: B2 bradykinin receptor (372 aa).

Residues 1–34 (MFNITSQVSALNATLAQGNSCLDAEWWSWLNTIQ) are Extracellular-facing. N-linked (GlcNAc...) asparagine glycans are attached at residues asparagine 3 and asparagine 12. Residues 35 to 58 (APFLWVLFVLAVLENIFVLSVFFL) traverse the membrane as a helical segment. Residues 59–67 (HKSSCTVAE) are Cytoplasmic-facing. Residues 68 to 92 (IYLGNLAVADLILAFGLPFWAITIA) form a helical membrane-spanning segment. Topologically, residues 93-105 (NNFDWLFGEVLCR) are extracellular. Residues cysteine 104 and cysteine 185 are joined by a disulfide bond. The helical transmembrane segment at 106-127 (MVNTMIQMNMYSSICFLMLVSI) threads the bilayer. Residues 128–149 (DRYLALVKTMSMGRMRGVRWAK) are Cytoplasmic-facing. At tyrosine 130 the chain carries Phosphotyrosine. The chain crosses the membrane as a helical span at residues 150 to 172 (LYSLVIWGCALLLSSPMLVFRTM). The Extracellular portion of the chain corresponds to 173–195 (KDYRDEGHNVTACLIIYPSLTWQ). An N-linked (GlcNAc...) asparagine glycan is attached at asparagine 181. Residues 196 to 222 (VFTNVLLNLVGFLLPLSIITFCTVQIM) form a helical membrane-spanning segment. Residues 223–241 (QVLRNNEMQKFKEIQTERR) lie on the Cytoplasmic side of the membrane. A helical transmembrane segment spans residues 242–266 (ATVLVLAVLLLFVVCWLPFQIGTFL). Over 267–284 (DTLRLLGFLPGCWEHVID) the chain is Extracellular. A helical membrane pass occupies residues 285–308 (LITQISSYLAYSNSCLNPLVYVIV). Over 309 to 364 (GKRFRKKSREVYHGLCRSGGCVSEPAQSENSMGTLRTSISVDRQIHKLQDWARSSS) the chain is Cytoplasmic. Tyrosine 320 is subject to Phosphotyrosine. Cysteine 324 carries S-palmitoyl cysteine lipidation. The residue at position 339 (serine 339) is a Phosphoserine. The residue at position 342 (threonine 342) is a Phosphothreonine. Phosphoserine; by GRK6 occurs at positions 346 and 348.

This sequence belongs to the G-protein coupled receptor 1 family. Bradykinin receptor subfamily. BDKRB2 sub-subfamily. In terms of assembly, forms a complex with PECAM1 and GNAQ. Interacts with PECAM1.

Its subcellular location is the cell membrane. Receptor for bradykinin. It is associated with G proteins that activate a phosphatidylinositol-calcium second messenger system. The protein is B2 bradykinin receptor (BDKRB2) of Cavia porcellus (Guinea pig).